The primary structure comprises 209 residues: NADH-quinone oxidoreductase subunit C (209 aa).

This sequence belongs to the complex I 30 kDa subunit family. As to quaternary structure, NDH-1 is composed of 14 different subunits. Subunits NuoB, C, D, E, F, and G constitute the peripheral sector of the complex.

The protein resides in the cell inner membrane. The enzyme catalyses a quinone + NADH + 5 H(+)(in) = a quinol + NAD(+) + 4 H(+)(out). Its function is as follows. NDH-1 shuttles electrons from NADH, via FMN and iron-sulfur (Fe-S) centers, to quinones in the respiratory chain. The immediate electron acceptor for the enzyme in this species is believed to be ubiquinone. Couples the redox reaction to proton translocation (for every two electrons transferred, four hydrogen ions are translocated across the cytoplasmic membrane), and thus conserves the redox energy in a proton gradient. In Phenylobacterium zucineum (strain HLK1), this protein is NADH-quinone oxidoreductase subunit C.